A 101-amino-acid polypeptide reads, in one-letter code: uncharacterized protein (101 aa).

A disordered region spans residues 39–74 (CDERHGRPLPHSQESQHGSATSKKAVRGTADTAPLE). The span at 50-60 (SQESQHGSATS) shows a compositional bias: polar residues.

This is an uncharacterized protein from Homo sapiens (Human).